The primary structure comprises 257 residues: Imidazole glycerol phosphate synthase subunit HisF (257 aa).

Residues Asp12 and Asp131 contribute to the active site.

It belongs to the HisA/HisF family. In terms of assembly, heterodimer of HisH and HisF.

Its subcellular location is the cytoplasm. The catalysed reaction is 5-[(5-phospho-1-deoxy-D-ribulos-1-ylimino)methylamino]-1-(5-phospho-beta-D-ribosyl)imidazole-4-carboxamide + L-glutamine = D-erythro-1-(imidazol-4-yl)glycerol 3-phosphate + 5-amino-1-(5-phospho-beta-D-ribosyl)imidazole-4-carboxamide + L-glutamate + H(+). Its pathway is amino-acid biosynthesis; L-histidine biosynthesis; L-histidine from 5-phospho-alpha-D-ribose 1-diphosphate: step 5/9. In terms of biological role, IGPS catalyzes the conversion of PRFAR and glutamine to IGP, AICAR and glutamate. The HisF subunit catalyzes the cyclization activity that produces IGP and AICAR from PRFAR using the ammonia provided by the HisH subunit. This is Imidazole glycerol phosphate synthase subunit HisF from Teredinibacter turnerae (strain ATCC 39867 / T7901).